The sequence spans 310 residues: Methionyl-tRNA formyltransferase (310 aa).

111–114 (SLLP) contributes to the (6S)-5,6,7,8-tetrahydrofolate binding site.

It belongs to the Fmt family.

It carries out the reaction L-methionyl-tRNA(fMet) + (6R)-10-formyltetrahydrofolate = N-formyl-L-methionyl-tRNA(fMet) + (6S)-5,6,7,8-tetrahydrofolate + H(+). Functionally, attaches a formyl group to the free amino group of methionyl-tRNA(fMet). The formyl group appears to play a dual role in the initiator identity of N-formylmethionyl-tRNA by promoting its recognition by IF2 and preventing the misappropriation of this tRNA by the elongation apparatus. This is Methionyl-tRNA formyltransferase from Rhodopseudomonas palustris (strain BisB5).